Reading from the N-terminus, the 57-residue chain is High-potential iron-sulfur protein (57 aa).

Cys21, Cys24, Cys33, and Cys46 together coordinate [4Fe-4S] cluster.

Belongs to the high-potential iron-sulfur protein (HiPIP) family. As to quaternary structure, homodimer.

Functionally, specific class of high-redox-potential 4Fe-4S ferredoxins. Functions in anaerobic electron transport in most purple and in some other photosynthetic bacteria and in at least one genus (Paracoccus) of halophilic, denitrifying bacteria. The sequence is that of High-potential iron-sulfur protein (hip) from Rhodopila globiformis (Rhodopseudomonas globiformis).